The chain runs to 523 residues: 2-isopropylmalate synthase (523 aa).

The Pyruvate carboxyltransferase domain maps to 5-267; sequence VIIFDTTLRD…HTAINHQEIW (263 aa). Positions 14, 202, 204, and 238 each coordinate Mn(2+). A regulatory domain region spans residues 392–523; the sequence is RLDYFSVQSG…QHNENNKETV (132 aa).

Belongs to the alpha-IPM synthase/homocitrate synthase family. LeuA type 1 subfamily. In terms of assembly, homodimer. The cofactor is Mn(2+).

It is found in the cytoplasm. It catalyses the reaction 3-methyl-2-oxobutanoate + acetyl-CoA + H2O = (2S)-2-isopropylmalate + CoA + H(+). Its pathway is amino-acid biosynthesis; L-leucine biosynthesis; L-leucine from 3-methyl-2-oxobutanoate: step 1/4. In terms of biological role, catalyzes the condensation of the acetyl group of acetyl-CoA with 3-methyl-2-oxobutanoate (2-ketoisovalerate) to form 3-carboxy-3-hydroxy-4-methylpentanoate (2-isopropylmalate). This chain is 2-isopropylmalate synthase, found in Escherichia coli O127:H6 (strain E2348/69 / EPEC).